The chain runs to 154 residues: Metallothiol transferase FosB (154 aa).

The region spanning 8–123 (GINHLLFSVS…DGHKFELHTG (116 aa)) is the VOC domain. 3 residues coordinate Mg(2+): His11, His70, and Glu119. Glu119 serves as the catalytic Proton donor/acceptor.

The protein belongs to the fosfomycin resistance protein family. FosB subfamily. Homodimer. Mg(2+) serves as cofactor.

It is found in the cytoplasm. Functionally, metallothiol transferase which confers resistance to fosfomycin by catalyzing the addition of a thiol cofactor to fosfomycin. L-cysteine is probably the physiological thiol donor. The protein is Metallothiol transferase FosB of Bacillus licheniformis (strain ATCC 14580 / DSM 13 / JCM 2505 / CCUG 7422 / NBRC 12200 / NCIMB 9375 / NCTC 10341 / NRRL NRS-1264 / Gibson 46).